The chain runs to 186 residues: Peptide deformylase (186 aa).

The Fe cation site is built by C113 and H156. Residue E157 is part of the active site. H160 lines the Fe cation pocket.

The protein belongs to the polypeptide deformylase family. Requires Fe(2+) as cofactor.

The catalysed reaction is N-terminal N-formyl-L-methionyl-[peptide] + H2O = N-terminal L-methionyl-[peptide] + formate. Its function is as follows. Removes the formyl group from the N-terminal Met of newly synthesized proteins. Requires at least a dipeptide for an efficient rate of reaction. N-terminal L-methionine is a prerequisite for activity but the enzyme has broad specificity at other positions. The chain is Peptide deformylase from Ligilactobacillus salivarius (strain UCC118) (Lactobacillus salivarius).